The sequence spans 253 residues: Triosephosphate isomerase (253 aa).

Substrate is bound at residue Asn-9–Lys-11. The active-site Electrophile is His-95. Glu-167 (proton acceptor) is an active-site residue. Substrate is bound by residues Gly-173, Ser-213, and Gly-234–Gly-235. The residue at position 213 (Ser-213) is a Phosphoserine.

Belongs to the triosephosphate isomerase family. Homodimer.

It is found in the cytoplasm. It carries out the reaction D-glyceraldehyde 3-phosphate = dihydroxyacetone phosphate. It participates in carbohydrate biosynthesis; gluconeogenesis. The protein operates within carbohydrate degradation; glycolysis; D-glyceraldehyde 3-phosphate from glycerone phosphate: step 1/1. Its function is as follows. Involved in the gluconeogenesis. Catalyzes stereospecifically the conversion of dihydroxyacetone phosphate (DHAP) to D-glyceraldehyde-3-phosphate (G3P). The polypeptide is Triosephosphate isomerase (Lysinibacillus sphaericus (strain C3-41)).